We begin with the raw amino-acid sequence, 657 residues long: Histidine ammonia-lyase (657 aa).

The segment at residues 253-255 (ASG) is a cross-link (5-imidazolinone (Ala-Gly)). Ser-254 is modified (2,3-didehydroalanine (Ser)). Position 396 is a phosphothreonine (Thr-396). Ser-635 bears the Phosphoserine mark. Thr-637 carries the phosphothreonine modification. Ser-648 carries the post-translational modification Phosphoserine.

It belongs to the PAL/histidase family. Contains an active site 4-methylidene-imidazol-5-one (MIO), which is formed autocatalytically by cyclization and dehydration of residues Ala-Ser-Gly.

It catalyses the reaction L-histidine = trans-urocanate + NH4(+). The protein operates within amino-acid degradation; L-histidine degradation into L-glutamate; N-formimidoyl-L-glutamate from L-histidine: step 1/3. This Mus musculus (Mouse) protein is Histidine ammonia-lyase (Hal).